The primary structure comprises 74 residues: Conotoxin Bu4 (74 aa).

The signal sequence occupies residues 1 to 22; sequence MKLTCVVIVAVLLLTACQLIIA. A propeptide spanning residues 23-45 is cleaved from the precursor; the sequence is EDSRGTQLHRALRKATKLSVSTR. 3 cysteine pairs are disulfide-bonded: cysteine 47-cysteine 63, cysteine 54-cysteine 66, and cysteine 62-cysteine 73.

Belongs to the conotoxin O1 superfamily. As to expression, expressed by the venom duct.

It is found in the secreted. The protein is Conotoxin Bu4 of Conus bullatus (Bubble cone).